A 154-amino-acid chain; its full sequence is uncharacterized protein (154 aa).

The protein localises to the mitochondrion. This is an uncharacterized protein from Marchantia polymorpha (Common liverwort).